The following is a 341-amino-acid chain: Type II methyltransferase M.NgoPII (341 aa).

The region spanning 12 to 341 (MKIISLFSGC…AAAIKKTLER (330 aa)) is the SAM-dependent MTase C5-type domain. Cys-84 is an active-site residue.

The protein belongs to the class I-like SAM-binding methyltransferase superfamily. C5-methyltransferase family.

It catalyses the reaction a 2'-deoxycytidine in DNA + S-adenosyl-L-methionine = a 5-methyl-2'-deoxycytidine in DNA + S-adenosyl-L-homocysteine + H(+). Functionally, a methylase that recognizes the double-stranded sequence 5'-GGCC-3', methylates C-3 on both strands, and protects the DNA from cleavage by the NgoPII endonuclease. In Neisseria gonorrhoeae, this protein is Type II methyltransferase M.NgoPII (ngoPIIM).